The primary structure comprises 631 residues: Phosphomethylpyrimidine synthase (631 aa).

Residues asparagine 239, methionine 268, tyrosine 297, histidine 333, 353-355 (SRG), 394-397 (DGLR), and glutamate 433 contribute to the substrate site. A Zn(2+)-binding site is contributed by histidine 437. Substrate is bound at residue tyrosine 460. Zn(2+) is bound at residue histidine 501. Residues cysteine 581, cysteine 584, and cysteine 589 each contribute to the [4Fe-4S] cluster site.

This sequence belongs to the ThiC family. As to quaternary structure, homodimer. [4Fe-4S] cluster serves as cofactor.

The catalysed reaction is 5-amino-1-(5-phospho-beta-D-ribosyl)imidazole + S-adenosyl-L-methionine = 4-amino-2-methyl-5-(phosphooxymethyl)pyrimidine + CO + 5'-deoxyadenosine + formate + L-methionine + 3 H(+). It functions in the pathway cofactor biosynthesis; thiamine diphosphate biosynthesis. Catalyzes the synthesis of the hydroxymethylpyrimidine phosphate (HMP-P) moiety of thiamine from aminoimidazole ribotide (AIR) in a radical S-adenosyl-L-methionine (SAM)-dependent reaction. This chain is Phosphomethylpyrimidine synthase, found in Salmonella agona (strain SL483).